A 483-amino-acid polypeptide reads, in one-letter code: Matrix metalloproteinase-20 (483 aa).

A signal peptide spans 1 to 22 (MKVLPASGLAVLLVTALKFSAA). The propeptide at 23–107 (APSLFAATPR…PRCGVPDVAN (85 aa)) is activation peptide. The Cysteine switch motif lies at 98 to 105 (PRCGVPDV). C100 contributes to the Zn(2+) binding site. Residues E164, A165, and D166 each coordinate Ca(2+). Zn(2+) is bound by residues H176 and D178. Ca(2+) contacts are provided by D183, G184, R186, and T188. H191 serves as a coordination point for Zn(2+). The Ca(2+) site is built by E197, G198, G200, and D202. H204 contacts Zn(2+). 2 residues coordinate Ca(2+): D206 and E209. A Zn(2+)-binding site is contributed by H226. E227 is an active-site residue. The Zn(2+) site is built by H230 and H236. Hemopexin repeat units lie at residues 293–343 (PDIC…FPQL), 344–389 (MSNV…GFPR), 391–439 (VQRI…FSGV), and 440–483 (NGQI…WIGC). A disulfide bridge links C296 with C483.

This sequence belongs to the peptidase M10A family. Zn(2+) is required as a cofactor. Requires Ca(2+) as cofactor. Post-translationally, autoactivates at least at the 107-Asn-|-Tyr-108 site. Expressed specifically in the enamel organ.

It is found in the secreted. Its subcellular location is the extracellular space. It localises to the extracellular matrix. In terms of biological role, degrades amelogenin, the major protein component of the enamel matrix and two of the macromolecules characterizing the cartilage extracellular matrix: aggrecan and the cartilage oligomeric matrix protein (COMP). May play a central role in tooth enamel formation. In Sus scrofa (Pig), this protein is Matrix metalloproteinase-20 (MMP20).